Consider the following 292-residue polypeptide: Elongation factor Ts (292 aa).

An involved in Mg(2+) ion dislocation from EF-Tu region spans residues 82–85 (TDFV).

This sequence belongs to the EF-Ts family.

The protein resides in the cytoplasm. In terms of biological role, associates with the EF-Tu.GDP complex and induces the exchange of GDP to GTP. It remains bound to the aminoacyl-tRNA.EF-Tu.GTP complex up to the GTP hydrolysis stage on the ribosome. The polypeptide is Elongation factor Ts (Bordetella bronchiseptica (strain ATCC BAA-588 / NCTC 13252 / RB50) (Alcaligenes bronchisepticus)).